A 282-amino-acid polypeptide reads, in one-letter code: Elongation factor Ts (282 aa).

Residues 81 to 84 (TDFV) form an involved in Mg(2+) ion dislocation from EF-Tu region. The span at 218–270 (KPAQPAQVAEVAAAPPAEPVADQPAAEPPAESVAPEPVVAESADAEPAPAAEG) shows a compositional bias: low complexity. Positions 218–282 (KPAQPAQVAE…SKKGSTKKKK (65 aa)) are disordered. Residues 273–282 (SKKGSTKKKK) are compositionally biased toward basic residues.

This sequence belongs to the EF-Ts family.

Its subcellular location is the cytoplasm. Its function is as follows. Associates with the EF-Tu.GDP complex and induces the exchange of GDP to GTP. It remains bound to the aminoacyl-tRNA.EF-Tu.GTP complex up to the GTP hydrolysis stage on the ribosome. In Synechococcus sp. (strain JA-3-3Ab) (Cyanobacteria bacterium Yellowstone A-Prime), this protein is Elongation factor Ts.